An 83-amino-acid chain; its full sequence is Large ribosomal subunit protein bL31B (83 aa).

The protein belongs to the bacterial ribosomal protein bL31 family. Type B subfamily. In terms of assembly, part of the 50S ribosomal subunit.

The polypeptide is Large ribosomal subunit protein bL31B (Lactobacillus johnsonii (strain CNCM I-12250 / La1 / NCC 533)).